The chain runs to 851 residues: UPF0182 protein CYA_1810 (851 aa).

7 consecutive transmembrane segments (helical) span residues glycine 7–phenylalanine 27, valine 47–serine 67, alanine 76–leucine 96, phenylalanine 141–leucine 161, leucine 168–leucine 188, leucine 220–leucine 240, and tryptophan 259–leucine 279.

The protein belongs to the UPF0182 family.

It is found in the cell membrane. The sequence is that of UPF0182 protein CYA_1810 from Synechococcus sp. (strain JA-3-3Ab) (Cyanobacteria bacterium Yellowstone A-Prime).